The following is a 619-amino-acid chain: Mitogen-activated protein kinase kinase kinase 2 (619 aa).

Residues 25–45 (LSLQETRKAKSSSPKKQNDVR) form a disordered region. A Phosphoserine modification is found at Ser-26. One can recognise a PB1 domain in the interval 43 to 122 (DVRVKFEHRG…KSLKILLVIN (80 aa)). Phosphoserine occurs at positions 153, 159, and 164. 3 disordered regions span residues 154 to 173 (IIGP…IPDE), 201 to 248 (LDPL…QEFS), and 289 to 355 (RTQG…APTN). The segment covering 203-219 (PLSLSSPENSGSGSCPS) has biased composition (low complexity). 6 positions are modified to phosphoserine: Ser-239, Ser-297, Ser-311, Ser-331, Ser-344, and Ser-349. A compositionally biased stretch (polar residues) spans 290-299 (TQGTSLRSPV). The segment covering 300 to 315 (SFSPTDHSLSTSSGSS) has biased composition (low complexity). Over residues 322–332 (DDSRIRRRGSD) the composition is skewed to basic and acidic residues. The 261-residue stretch at 357-617 (RLGKLLGQGA…DELLRHMFVH (261 aa)) folds into the Protein kinase domain. ATP is bound by residues 362 to 371 (LGQGAFGRVY) and Lys-385. Catalysis depends on Asp-483, which acts as the Proton acceptor.

It belongs to the protein kinase superfamily. STE Ser/Thr protein kinase family. MAP kinase kinase kinase subfamily. As to quaternary structure, interacts with PKN2; the interaction activates PKN2 kinase activity in a MAP3K2-independent kinase activity. Self-associates. Binds both upstream activators and downstream substrates in multimolecular complexes. Interacts (via the kinase catalytic domain) with STK38. Interacts with XIAP/BIRC4. Requires Mg(2+) as cofactor. Post-translationally, autophosphorylated. In terms of processing, ubiquitination by XIAP/BIRC4 does not lead to proteasomal degradation.

It is found in the cytoplasm. The protein localises to the nucleus. It catalyses the reaction L-seryl-[protein] + ATP = O-phospho-L-seryl-[protein] + ADP + H(+). The enzyme catalyses L-threonyl-[protein] + ATP = O-phospho-L-threonyl-[protein] + ADP + H(+). Its activity is regulated as follows. Activated by phosphorylation on Thr-524. Functionally, component of a protein kinase signal transduction cascade. Regulates the JNK and ERK5 pathways by phosphorylating and activating MAP2K5 and MAP2K7. Plays a role in caveolae kiss-and-run dynamics. The protein is Mitogen-activated protein kinase kinase kinase 2 (MAP3K2) of Homo sapiens (Human).